The following is a 227-amino-acid chain: Cytochrome c oxidase subunit 2 (227 aa).

The Mitochondrial intermembrane segment spans residues 1-14 (MAYPFQLGLQDATS). A helical transmembrane segment spans residues 15-45 (PIMEELLHFHDHTLMIVFLISSLVLYIISSM). Topologically, residues 46–59 (LTTKLTHTSTMDAQ) are mitochondrial matrix. The chain crosses the membrane as a helical span at residues 60–87 (EVETVWTILPAIILVLIALPSLRILYMM). Residues 88–227 (DEINNPSLTV…YFETWSALML (140 aa)) are Mitochondrial intermembrane-facing. Residues histidine 161, cysteine 196, glutamate 198, cysteine 200, histidine 204, and methionine 207 each coordinate Cu cation. Glutamate 198 is a binding site for Mg(2+). Tyrosine 218 carries the phosphotyrosine modification.

It belongs to the cytochrome c oxidase subunit 2 family. In terms of assembly, component of the cytochrome c oxidase (complex IV, CIV), a multisubunit enzyme composed of 14 subunits. The complex is composed of a catalytic core of 3 subunits MT-CO1, MT-CO2 and MT-CO3, encoded in the mitochondrial DNA, and 11 supernumerary subunits COX4I, COX5A, COX5B, COX6A, COX6B, COX6C, COX7A, COX7B, COX7C, COX8 and NDUFA4, which are encoded in the nuclear genome. The complex exists as a monomer or a dimer and forms supercomplexes (SCs) in the inner mitochondrial membrane with NADH-ubiquinone oxidoreductase (complex I, CI) and ubiquinol-cytochrome c oxidoreductase (cytochrome b-c1 complex, complex III, CIII), resulting in different assemblies (supercomplex SCI(1)III(2)IV(1) and megacomplex MCI(2)III(2)IV(2)). Found in a complex with TMEM177, COA6, COX18, COX20, SCO1 and SCO2. Interacts with TMEM177 in a COX20-dependent manner. Interacts with COX20. Interacts with COX16. Cu cation serves as cofactor.

Its subcellular location is the mitochondrion inner membrane. It carries out the reaction 4 Fe(II)-[cytochrome c] + O2 + 8 H(+)(in) = 4 Fe(III)-[cytochrome c] + 2 H2O + 4 H(+)(out). Component of the cytochrome c oxidase, the last enzyme in the mitochondrial electron transport chain which drives oxidative phosphorylation. The respiratory chain contains 3 multisubunit complexes succinate dehydrogenase (complex II, CII), ubiquinol-cytochrome c oxidoreductase (cytochrome b-c1 complex, complex III, CIII) and cytochrome c oxidase (complex IV, CIV), that cooperate to transfer electrons derived from NADH and succinate to molecular oxygen, creating an electrochemical gradient over the inner membrane that drives transmembrane transport and the ATP synthase. Cytochrome c oxidase is the component of the respiratory chain that catalyzes the reduction of oxygen to water. Electrons originating from reduced cytochrome c in the intermembrane space (IMS) are transferred via the dinuclear copper A center (CU(A)) of subunit 2 and heme A of subunit 1 to the active site in subunit 1, a binuclear center (BNC) formed by heme A3 and copper B (CU(B)). The BNC reduces molecular oxygen to 2 water molecules using 4 electrons from cytochrome c in the IMS and 4 protons from the mitochondrial matrix. The chain is Cytochrome c oxidase subunit 2 (MT-CO2) from Speothos venaticus (Bush dog).